A 413-amino-acid polypeptide reads, in one-letter code: Histidine--tRNA ligase (413 aa).

Belongs to the class-II aminoacyl-tRNA synthetase family. Homodimer.

Its subcellular location is the cytoplasm. The catalysed reaction is tRNA(His) + L-histidine + ATP = L-histidyl-tRNA(His) + AMP + diphosphate + H(+). The sequence is that of Histidine--tRNA ligase from Neorickettsia sennetsu (strain ATCC VR-367 / Miyayama) (Ehrlichia sennetsu).